We begin with the raw amino-acid sequence, 816 residues long: Fibroblast growth factor receptor (816 aa).

An N-terminal signal peptide occupies residues 1–19 (MISDWCVVLVLLMSRLVFG). At 20–370 (LNFTEPVNYI…YKEESVEKTV (351 aa)) the chain is on the extracellular side. Asn-21, Asn-69, Asn-119, Asn-156, Asn-171, Asn-244, Asn-274, Asn-313, and Asn-321 each carry an N-linked (GlcNAc...) asparagine glycan. The Ig-like C2-type 1 domain maps to 25 to 105 (PVNYILKLGE…VTAMNEESVQ (81 aa)). Cysteines 43 and 94 form a disulfide. An Ig-like C2-type 2 domain is found at 126 to 217 (LRIKNDISLL…GKIEHIMTVE (92 aa)). A disulfide bridge links Cys-147 with Cys-201. The chain crosses the membrane as a helical span at residues 371–391 (IFIVITSMLAGLIFVAFVIFF). Over 392-816 (ICRVRSKDKF…DILLSHYAVS (425 aa)) the chain is Cytoplasmic. In terms of domain architecture, Protein kinase spans 474–747 (LETDCLLGEG…QLIEDLERML (274 aa)). ATP is bound by residues 480–488 (LGEGAFGRV) and Lys-508. Residue Asp-612 is the Proton acceptor of the active site. Tyr-643 is modified (phosphotyrosine; by autocatalysis).

It belongs to the protein kinase superfamily. Tyr protein kinase family. Fibroblast growth factor receptor subfamily.

The protein localises to the membrane. The enzyme catalyses L-tyrosyl-[protein] + ATP = O-phospho-L-tyrosyl-[protein] + ADP + H(+). Functionally, receptor for basic fibroblast growth factor. The protein is Fibroblast growth factor receptor (FGFR) of Hydra vulgaris (Hydra).